Consider the following 252-residue polypeptide: D-aminoacyl-tRNA deacylase (252 aa).

The protein belongs to the DtdA deacylase family. Monomer. The cofactor is Zn(2+).

The enzyme catalyses a D-aminoacyl-tRNA + H2O = a tRNA + a D-alpha-amino acid + H(+). It carries out the reaction glycyl-tRNA(Ala) + H2O = tRNA(Ala) + glycine + H(+). Functionally, D-aminoacyl-tRNA deacylase with broad substrate specificity. By recycling D-aminoacyl-tRNA to D-amino acids and free tRNA molecules, this enzyme counteracts the toxicity associated with the formation of D-aminoacyl-tRNA entities in vivo. The sequence is that of D-aminoacyl-tRNA deacylase from Pyrobaculum neutrophilum (strain DSM 2338 / JCM 9278 / NBRC 100436 / V24Sta) (Thermoproteus neutrophilus).